A 248-amino-acid chain; its full sequence is Phosphatidylserine decarboxylase proenzyme (248 aa).

Ser-206 functions as the Schiff-base intermediate with substrate; via pyruvic acid in the catalytic mechanism. Pyruvic acid (Ser); by autocatalysis is present on Ser-206.

Belongs to the phosphatidylserine decarboxylase family. PSD-A subfamily. Heterodimer of a large membrane-associated beta subunit and a small pyruvoyl-containing alpha subunit. It depends on pyruvate as a cofactor. In terms of processing, is synthesized initially as an inactive proenzyme. Formation of the active enzyme involves a self-maturation process in which the active site pyruvoyl group is generated from an internal serine residue via an autocatalytic post-translational modification. Two non-identical subunits are generated from the proenzyme in this reaction, and the pyruvate is formed at the N-terminus of the alpha chain, which is derived from the carboxyl end of the proenzyme. The post-translation cleavage follows an unusual pathway, termed non-hydrolytic serinolysis, in which the side chain hydroxyl group of the serine supplies its oxygen atom to form the C-terminus of the beta chain, while the remainder of the serine residue undergoes an oxidative deamination to produce ammonia and the pyruvoyl prosthetic group on the alpha chain.

It localises to the cell membrane. It catalyses the reaction a 1,2-diacyl-sn-glycero-3-phospho-L-serine + H(+) = a 1,2-diacyl-sn-glycero-3-phosphoethanolamine + CO2. It participates in phospholipid metabolism; phosphatidylethanolamine biosynthesis; phosphatidylethanolamine from CDP-diacylglycerol: step 2/2. Catalyzes the formation of phosphatidylethanolamine (PtdEtn) from phosphatidylserine (PtdSer). In Nitrobacter hamburgensis (strain DSM 10229 / NCIMB 13809 / X14), this protein is Phosphatidylserine decarboxylase proenzyme.